Here is a 258-residue protein sequence, read N- to C-terminus: Imidazole glycerol phosphate synthase subunit HisF (258 aa).

Active-site residues include Asp11 and Asp130.

It belongs to the HisA/HisF family. As to quaternary structure, heterodimer of HisH and HisF.

Its subcellular location is the cytoplasm. The catalysed reaction is 5-[(5-phospho-1-deoxy-D-ribulos-1-ylimino)methylamino]-1-(5-phospho-beta-D-ribosyl)imidazole-4-carboxamide + L-glutamine = D-erythro-1-(imidazol-4-yl)glycerol 3-phosphate + 5-amino-1-(5-phospho-beta-D-ribosyl)imidazole-4-carboxamide + L-glutamate + H(+). Its pathway is amino-acid biosynthesis; L-histidine biosynthesis; L-histidine from 5-phospho-alpha-D-ribose 1-diphosphate: step 5/9. Its function is as follows. IGPS catalyzes the conversion of PRFAR and glutamine to IGP, AICAR and glutamate. The HisF subunit catalyzes the cyclization activity that produces IGP and AICAR from PRFAR using the ammonia provided by the HisH subunit. In Rhodopseudomonas palustris (strain BisB18), this protein is Imidazole glycerol phosphate synthase subunit HisF.